We begin with the raw amino-acid sequence, 296 residues long: Nucleotide-binding protein Spy49_0545 (296 aa).

13 to 20 (GMSGAGKT) contributes to the ATP binding site. Residue 63–66 (DMRS) coordinates GTP.

The protein belongs to the RapZ-like family.

Functionally, displays ATPase and GTPase activities. The sequence is that of Nucleotide-binding protein Spy49_0545 from Streptococcus pyogenes serotype M49 (strain NZ131).